The sequence spans 179 residues: Large ribosomal subunit protein uL5 (179 aa).

Contacts the P site tRNA. Forms a bridge to the 30S subunit in the 70S ribosome. Part of the 50S ribosomal subunit. Part of the 5S rRNA/L5/L18 subcomplex; in this organism only 2 proteins, L5 and L18 have been shown to be part of the 5S rRNA subcomplex, unlike E.coli and T.thermophilus where L25 (TL5) is also found. Has been shown to bind 5S rRNA.

In terms of biological role, this is one of the proteins that bind and probably mediate the attachment of the 5S RNA into the large ribosomal subunit, where it forms part of the central protuberance. In the 70S ribosome it contacts protein S13 of the 30S subunit (bridge B1b), connecting the 2 subunits; this bridge is implicated in subunit movement. Contacts the P site tRNA; the 5S rRNA and some of its associated proteins might help stabilize positioning of ribosome-bound tRNAs. The protein is Large ribosomal subunit protein uL5 (rplE) of Geobacillus stearothermophilus (Bacillus stearothermophilus).